A 218-amino-acid polypeptide reads, in one-letter code: Cytochrome b6 (218 aa).

A helical transmembrane segment spans residues 35–55 (IFYCLGGITLVCFLVQFATGF). Cys38 serves as a coordination point for heme c. Residues His89 and His103 each contribute to the heme b site. Transmembrane regions (helical) follow at residues 93-113 (ASMM…TGGF), 119-139 (LTWV…VTGY), and 189-209 (LHTF…FLMI). The heme b site is built by His190 and His205.

It belongs to the cytochrome b family. PetB subfamily. In terms of assembly, the 4 large subunits of the cytochrome b6-f complex are cytochrome b6, subunit IV (17 kDa polypeptide, PetD), cytochrome f and the Rieske protein, while the 4 small subunits are PetG, PetL, PetM and PetN. The complex functions as a dimer. Requires heme b as cofactor. It depends on heme c as a cofactor.

The protein resides in the cellular thylakoid membrane. Its function is as follows. Component of the cytochrome b6-f complex, which mediates electron transfer between photosystem II (PSII) and photosystem I (PSI), cyclic electron flow around PSI, and state transitions. The protein is Cytochrome b6 of Prochlorococcus marinus (strain MIT 9303).